Consider the following 171-residue polypeptide: Sorcin (171 aa).

EF-hand domains follow at residues 3-38, 40-69, 70-105, and 106-140; these read MDTN…GLGT, LNIR…LGLF, KYVQ…FGYH, and LSPQ…LQTL. The Ca(2+) site is built by D16, D18, S20, S22, E27, D53, D55, N57, T59, E64, D83, D85, S87, S89, and E94.

It is found in the cytoplasm. Calcium-binding protein. This is Sorcin from Schistosoma japonicum (Blood fluke).